The primary structure comprises 133 residues: Cytochrome c-type biogenesis protein CcmE (133 aa).

Residues 1–7 lie on the Cytoplasmic side of the membrane; that stretch reads MKRKHKR. The helical; Signal-anchor for type II membrane protein transmembrane segment at 8 to 28 threads the bilayer; sequence LLFIIVTFIIFGSSVVIVLNK. Residues 29–133 are Periplasmic-facing; it reads LRSNISFFFT…NYKPGKYRAK (105 aa). Positions 121 and 125 each coordinate heme.

It belongs to the CcmE/CycJ family.

The protein resides in the cell inner membrane. Functionally, heme chaperone required for the biogenesis of c-type cytochromes. Transiently binds heme delivered by CcmC and transfers the heme to apo-cytochromes in a process facilitated by CcmF and CcmH. In Ehrlichia canis (strain Jake), this protein is Cytochrome c-type biogenesis protein CcmE.